Consider the following 490-residue polypeptide: Allantoin permease (490 aa).

Transmembrane regions (helical) follow at residues 36–56 (IWMG…LIAI), 60–80 (PWQV…ALAL), 116–136 (AIMW…ILLL), 151–171 (ILGI…IHLL), 190–210 (LVYL…GGLG), 225–245 (TFWP…TLIL), 265–285 (FYGL…VTSG), 308–328 (YVIV…NVAA), 350–370 (GSFI…MESA), 373–393 (VYAF…VMMA), 425–445 (AFAA…VPVL), and 448–468 (LYDI…IVLM).

This sequence belongs to the purine-cytosine permease (2.A.39) family.

It localises to the cell membrane. The enzyme catalyses (S)-allantoin(in) + H(+)(in) = (S)-allantoin(out) + H(+)(out). Its function is as follows. Uptake of allantoin into the cell. Allantoin uptake is not dependent on sodium, and PucI is likely to be a proton-coupled symporter. Shows highest recognition for binding of allantoin, good recognition for binding of hydantoin, L-5-benzylhydantoin and 5-hydroxyhydantoin, and to a lesser extent for a range of nucleobases and nucleosides. This Bacillus subtilis (strain 168) protein is Allantoin permease.